The chain runs to 397 residues: CCA-adding enzyme (397 aa).

Residues Gly-32 and Arg-35 each coordinate ATP. Residues Gly-32 and Arg-35 each coordinate CTP. Mg(2+)-binding residues include Asp-45 and Asp-47. ATP contacts are provided by Arg-116, Asp-159, Arg-162, Arg-165, and Arg-168. The CTP site is built by Arg-116, Asp-159, Arg-162, Arg-165, and Arg-168.

It belongs to the tRNA nucleotidyltransferase/poly(A) polymerase family. Bacterial CCA-adding enzyme type 3 subfamily. In terms of assembly, homodimer. Requires Mg(2+) as cofactor.

The enzyme catalyses a tRNA precursor + 2 CTP + ATP = a tRNA with a 3' CCA end + 3 diphosphate. It catalyses the reaction a tRNA with a 3' CCA end + 2 CTP + ATP = a tRNA with a 3' CCACCA end + 3 diphosphate. Functionally, catalyzes the addition and repair of the essential 3'-terminal CCA sequence in tRNAs without using a nucleic acid template. Adds these three nucleotides in the order of C, C, and A to the tRNA nucleotide-73, using CTP and ATP as substrates and producing inorganic pyrophosphate. tRNA 3'-terminal CCA addition is required both for tRNA processing and repair. Also involved in tRNA surveillance by mediating tandem CCA addition to generate a CCACCA at the 3' terminus of unstable tRNAs. While stable tRNAs receive only 3'-terminal CCA, unstable tRNAs are marked with CCACCA and rapidly degraded. The protein is CCA-adding enzyme of Latilactobacillus sakei subsp. sakei (strain 23K) (Lactobacillus sakei subsp. sakei).